Reading from the N-terminus, the 202-residue chain is Small ribosomal subunit protein uS4 (202 aa).

Residues 90–152 (MRLDNTVFRL…ERSRRLVETN (63 aa)) enclose the S4 RNA-binding domain.

This sequence belongs to the universal ribosomal protein uS4 family. Part of the 30S ribosomal subunit. Contacts protein S5. The interaction surface between S4 and S5 is involved in control of translational fidelity.

In terms of biological role, one of the primary rRNA binding proteins, it binds directly to 16S rRNA where it nucleates assembly of the body of the 30S subunit. Functionally, with S5 and S12 plays an important role in translational accuracy. The polypeptide is Small ribosomal subunit protein uS4 (Thermosynechococcus vestitus (strain NIES-2133 / IAM M-273 / BP-1)).